The sequence spans 370 residues: DNA replication and repair protein RecF (370 aa).

30 to 37 (GENAQGKT) serves as a coordination point for ATP.

This sequence belongs to the RecF family.

It localises to the cytoplasm. The RecF protein is involved in DNA metabolism; it is required for DNA replication and normal SOS inducibility. RecF binds preferentially to single-stranded, linear DNA. It also seems to bind ATP. The polypeptide is DNA replication and repair protein RecF (Staphylococcus aureus (strain bovine RF122 / ET3-1)).